A 247-amino-acid chain; its full sequence is UPF0280 protein MmarC5_0355 (247 aa).

Belongs to the UPF0280 family.

The polypeptide is UPF0280 protein MmarC5_0355 (Methanococcus maripaludis (strain C5 / ATCC BAA-1333)).